A 555-amino-acid chain; its full sequence is Gamma-aminobutyric acid receptor subunit alpha-4 (555 aa).

The N-terminal stretch at 1-35 (MVSAKKVPAIAMSFGVSFALLHFLCLAACLNESPG) is a signal peptide. Residues 36–259 (QNQKEEKLCP…FHLRRKMGYF (224 aa)) are Extracellular-facing. N-linked (GlcNAc...) asparagine glycosylation is present at Asn47. 4-aminobutanoate is bound at residue Arg100. Asn144 and Asn157 each carry an N-linked (GlcNAc...) asparagine glycan. Thr163 provides a ligand contact to 4-aminobutanoate. Cys172 and Cys186 are joined by a disulfide. Residues 260 to 280 (MIQTYIPCIMTVILSQVSFWI) traverse the membrane as a helical segment. Over 281–284 (NKES) the chain is Cytoplasmic. The chain crosses the membrane as a helical span at residues 285–305 (VPARTVFGITTVLTMTTLSIS). The Extracellular segment spans residues 306–318 (ARHSLPKVSYATA). The helical transmembrane segment at 319–341 (MDWFIAVCFAFVFSALIEFAAVN) threads the bilayer. Residues 342–518 (YFTNVQMEKA…PPPSGSGTSK (177 aa)) lie on the Cytoplasmic side of the membrane. 2 disordered regions span residues 354–435 (KTSK…SPNP) and 495–516 (GTSG…GSGT). Over residues 410–421 (SSKSSTVVQGSS) the composition is skewed to low complexity. The span at 422-435 (EATPQSYLASSPNP) shows a compositional bias: polar residues. The chain crosses the membrane as a helical span at residues 519-545 (IDKYARILFPVTFGAFNMVYWVVYLSK). The Extracellular segment spans residues 546–555 (DTMEKSESLM).

It belongs to the ligand-gated ion channel (TC 1.A.9) family. Gamma-aminobutyric acid receptor (TC 1.A.9.5) subfamily. GABRA4 sub-subfamily. Heteropentamer, formed by a combination of alpha (GABRA1-6), beta (GABRB1-3), gamma (GABRG1-3), delta (GABRD), epsilon (GABRE), rho (GABRR1-3), pi (GABRP) and theta (GABRQ) chains, each subunit exhibiting distinct physiological and pharmacological properties. In terms of tissue distribution, expressed in the brain.

It localises to the cell membrane. The protein resides in the postsynaptic cell membrane. The catalysed reaction is chloride(in) = chloride(out). With respect to regulation, potentiated by histamine. In terms of biological role, alpha subunit of the heteropentameric ligand-gated chloride channel gated by gamma-aminobutyric acid (GABA), a major inhibitory neurotransmitter in the brain. GABA-gated chloride channels, also named GABA(A) receptors (GABAAR), consist of five subunits arranged around a central pore and contain GABA active binding site(s) located at the alpha and beta subunit interface(s). When activated by GABA, GABAARs selectively allow the flow of chloride anions across the cell membrane down their electrochemical gradient. GABAARs containing alpha-4 are predominantly extrasynaptic, contributing to tonic inhibition in dentate granule cells and thalamic relay neurons. Extrasynaptic alpha-4-containing GABAARs control levels of excitability and network activity. GABAARs containing alpha-4 are often found with the delta or gamma-2 subunits, in combination with beta subunits. GABAAR containing alpha-4-beta-3-delta subunits can simultaneously bind GABA and histamine where histamine binds at the interface of two neighboring beta subunits, which may be involved in the regulation of sleep and wakefulness. In Bos taurus (Bovine), this protein is Gamma-aminobutyric acid receptor subunit alpha-4 (GABRA4).